Here is a 1339-residue protein sequence, read N- to C-terminus: DNA polymerase alpha catalytic subunit (1339 aa).

Disordered stretches follow at residues 1–90 (MSGG…SMSD) and 177–203 (NVER…GYRN). Residues 27-36 (DQWRSLREEV) are compositionally biased toward basic and acidic residues. Positions 79–89 (PKQQTLAQSMS) are enriched in polar residues. Zn(2+) is bound by residues Cys-1179, Cys-1182, Cys-1213, Cys-1216, Cys-1233, Cys-1243, Cys-1271, and Cys-1286. The CysA-type zinc finger occupies 1179–1216 (CTHCRLMTPINPHTRVMEVLADQERQRDRFDLYVCVSC). The CysB motif motif lies at 1243 to 1271 (CGSAAAVKAVRTQFTYYRALFDVPHAPGC).

Belongs to the DNA polymerase type-B family.

It is found in the nucleus. It carries out the reaction DNA(n) + a 2'-deoxyribonucleoside 5'-triphosphate = DNA(n+1) + diphosphate. Polymerase alpha in a complex with DNA primase is a replicative polymerase. This Leishmania donovani protein is DNA polymerase alpha catalytic subunit.